The following is a 377-amino-acid chain: Methionine import ATP-binding protein MetN 2 (377 aa).

Positions 25 to 262 (IRIEHLSKTF…PKSAVARSFL (238 aa)) constitute an ABC transporter domain. ATP is bound at residue 59-66 (GRSGAGKS).

Belongs to the ABC transporter superfamily. Methionine importer (TC 3.A.1.24) family. In terms of assembly, the complex is composed of two ATP-binding proteins (MetN), two transmembrane proteins (MetI) and a solute-binding protein (MetQ).

The protein localises to the cell inner membrane. The enzyme catalyses L-methionine(out) + ATP + H2O = L-methionine(in) + ADP + phosphate + H(+). The catalysed reaction is D-methionine(out) + ATP + H2O = D-methionine(in) + ADP + phosphate + H(+). Part of the ABC transporter complex MetNIQ involved in methionine import. Responsible for energy coupling to the transport system. This Rhodopseudomonas palustris (strain ATCC BAA-98 / CGA009) protein is Methionine import ATP-binding protein MetN 2.